Here is a 364-residue protein sequence, read N- to C-terminus: Phenylalanine dehydrogenase (364 aa).

Arginine 62 contributes to the NAD(+) binding site. Lysine 86 serves as a coordination point for L-phenylalanine. The active-site Proton donor/acceptor is lysine 98. Residues aspartate 133, serine 164, threonine 168, 255–256 (AM), and 276–278 (AAN) contribute to the NAD(+) site. Residue asparagine 278 participates in L-phenylalanine binding.

This sequence belongs to the Glu/Leu/Phe/Val dehydrogenases family.

The enzyme catalyses L-phenylalanine + NAD(+) + H2O = 3-phenylpyruvate + NH4(+) + NADH + H(+). It functions in the pathway amino-acid biosynthesis; L-phenylalanine biosynthesis; L-phenylalanine from phenylpyruvate (PDH route): step 1/1. Catalyzes the reversible NAD(+)-dependent oxidative deamination of L-phenylalanine to phenylpyruvate. The protein is Phenylalanine dehydrogenase of Rhodococcus jostii (strain RHA1).